A 510-amino-acid polypeptide reads, in one-letter code: Inositol-3-phosphate synthase 1 (510 aa).

Positions 70, 71, 72, 73, 143, 180, 190, 193, 230, 231, 232, 233, 281, 282, 306, 309, 340, 341, 342, 355, 393, 394, 422, and 423 each coordinate NAD(+).

Belongs to the myo-inositol 1-phosphate synthase family. It depends on NAD(+) as a cofactor.

It is found in the cytoplasm. It localises to the cytosol. The protein localises to the nucleus. It catalyses the reaction D-glucose 6-phosphate = 1D-myo-inositol 3-phosphate. It participates in polyol metabolism; myo-inositol biosynthesis; myo-inositol from D-glucose 6-phosphate: step 1/2. Functionally, key enzyme in myo-inositol biosynthesis pathway that catalyzes the conversion of glucose 6-phosphate to 1-myo-inositol 1-phosphate in a NAD-dependent manner. May play a role in oxidative stress resistance and influences ascorbate levels. This chain is Inositol-3-phosphate synthase 1, found in Populus euphratica (Euphrates poplar).